A 600-amino-acid polypeptide reads, in one-letter code: DNA primase (600 aa).

The CHC2-type zinc-finger motif lies at 38-62; that stretch reads CPFHDEKTPSFIVYPTRGHYHCYGC. Residues 253–333 enclose the Toprim domain; the sequence is KRVILVEGQA…GIAVIVCRLP (81 aa). Mg(2+) contacts are provided by Glu-259, Asp-304, and Asp-306.

It belongs to the DnaG primase family. Monomer. Interacts with DnaB. It depends on Zn(2+) as a cofactor. Requires Mg(2+) as cofactor.

It carries out the reaction ssDNA + n NTP = ssDNA/pppN(pN)n-1 hybrid + (n-1) diphosphate.. Its function is as follows. RNA polymerase that catalyzes the synthesis of short RNA molecules used as primers for DNA polymerase during DNA replication. This is DNA primase from Chlamydia muridarum (strain MoPn / Nigg).